We begin with the raw amino-acid sequence, 68 residues long: Purkinje cell protein 4-like protein 1 (68 aa).

A compositionally biased stretch (polar residues) spans 1–16 (MSELNTKTPPAANQAS). Positions 1-42 (MSELNTKTPPAANQASDPEEKGKPGSIKKAEEEEEIDIDLTA) are disordered. T8 is subject to Phosphothreonine. A compositionally biased stretch (basic and acidic residues) spans 18–31 (PEEKGKPGSIKKAE). Residues 45–68 (TEKAALAIQGKFRRFQKRKKDSSS) form the IQ domain.

This sequence belongs to the PCP4 family. As to expression, expressed in laminar and nuclear structures of the CNS.

The chain is Purkinje cell protein 4-like protein 1 (Pcp4l1) from Mus musculus (Mouse).